A 208-amino-acid polypeptide reads, in one-letter code: Cytochrome c oxidase assembly protein CtaG (208 aa).

Over 1–19 the chain is Cytoplasmic; the sequence is MKQRPTGPDTTPRNRRGFG. Residues 20–42 form a helical; Signal-anchor for type II membrane protein membrane-spanning segment; sequence RDTAVASVCGLVVALMVGASYAA. Over 43–208 the chain is Periplasmic; it reads VPFYNWFCRV…SEAGPRQGAL (166 aa).

The protein belongs to the COX11/CtaG family.

Its subcellular location is the cell inner membrane. Functionally, exerts its effect at some terminal stage of cytochrome c oxidase synthesis, probably by being involved in the insertion of the copper B into subunit I. In Rhodopseudomonas palustris (strain BisA53), this protein is Cytochrome c oxidase assembly protein CtaG.